We begin with the raw amino-acid sequence, 256 residues long: Beta-fibrinogenase-like (256 aa).

The N-terminal stretch at 1 to 18 (MVLIKVLANLLVLQLSYA) is a signal peptide. Positions 19–24 (QKSSEL) are excised as a propeptide. The Peptidase S1 domain occupies 25-247 (VVGGDECNIN…YTDWIQSIIA (223 aa)). 6 disulfides stabilise this stretch: cysteine 31–cysteine 161, cysteine 49–cysteine 65, cysteine 96–cysteine 254, cysteine 140–cysteine 208, cysteine 172–cysteine 187, and cysteine 198–cysteine 223. Asparagine 44 carries N-linked (GlcNAc...) asparagine glycosylation. Residue histidine 64 is the Charge relay system of the active site. Asparagine 78 and asparagine 101 each carry an N-linked (GlcNAc...) asparagine glycan. The active-site Charge relay system is the aspartate 108. N-linked (GlcNAc...) asparagine glycosylation occurs at asparagine 152. Catalysis depends on serine 202, which acts as the Charge relay system.

Belongs to the peptidase S1 family. Snake venom subfamily. Monomer. Expressed by the venom gland.

It is found in the secreted. Its function is as follows. Snake venom serine protease that has fibrinogenolytic activities by hydrolyzing the beta chain of fibrinogen (FGB). Typical arginine esterase which hydrolyzes esters and amides of arginine. This chain is Beta-fibrinogenase-like, found in Daboia siamensis (Eastern Russel's viper).